Here is a 209-residue protein sequence, read N- to C-terminus: Large ribosomal subunit protein uL3 (209 aa).

At glutamine 150 the chain carries N5-methylglutamine.

Belongs to the universal ribosomal protein uL3 family. Part of the 50S ribosomal subunit. Forms a cluster with proteins L14 and L19. Methylated by PrmB.

In terms of biological role, one of the primary rRNA binding proteins, it binds directly near the 3'-end of the 23S rRNA, where it nucleates assembly of the 50S subunit. This is Large ribosomal subunit protein uL3 from Vibrio vulnificus (strain YJ016).